The following is a 345-amino-acid chain: Isocitrate/homoisocitrate dehydrogenase (345 aa).

Residue 69–71 (TTT) coordinates NADH. Residues R86, R96, R111, Y118, K163, and N165 each coordinate (2R,3S)-homoisocitrate. An NADH-binding site is contributed by N165. D194, D218, and D222 together coordinate Mg(2+). NADH-binding positions include 251-255 (GSAPD) and N263.

The protein belongs to the isocitrate and isopropylmalate dehydrogenases family. It depends on Mn(2+) as a cofactor. Mg(2+) is required as a cofactor.

The catalysed reaction is D-threo-isocitrate + NAD(+) = 2-oxoglutarate + CO2 + NADH. It carries out the reaction (2R,3S)-homoisocitrate + NAD(+) = 2-oxoadipate + CO2 + NADH. It functions in the pathway amino-acid biosynthesis; L-lysine biosynthesis via AAA pathway; L-alpha-aminoadipate from 2-oxoglutarate: step 4/5. Catalyzes the NAD(+)-dependent oxidative decarboxylation of homoisocitrate to 2-oxoadipate (alpha-ketoadipate), and of isocitrate to 2-oxoglutarate, at near equal efficiency. May thus play a dual role in glutamate and lysine biosynthesis in vivo. Preferentially uses NAD over NADP. This Pyrococcus horikoshii (strain ATCC 700860 / DSM 12428 / JCM 9974 / NBRC 100139 / OT-3) protein is Isocitrate/homoisocitrate dehydrogenase.